A 285-amino-acid polypeptide reads, in one-letter code: MAINFEQVNFSYGAGTTLAQPILHDINVTIPDGQVTAIIGQTGSGKSTFIQHLNGLLKPTTGRVVIDDFVLTSDLKEKNLTSLRARVGMVFQFPENQLFANTVLEDVMYAPINFGYAKADAEFAAKTALKQVNVSEELWDKSPFELSGGQMRRVAMAGTLASNPDIIVLDEPAAGLDPKGQKELLAIVRGLKEAGKLVVFISHQMDHVIAVADHVIVMHDGGVVAEGTPVEIFNKDLVWFKTVALDLPKAGQFAEQLRQKGHILRHRPLLLTELATMLNEEKRHE.

The ABC transporter domain maps to I3–L245. G40–S47 contacts ATP. E171 functions as the Proton acceptor in the catalytic mechanism.

This sequence belongs to the ABC transporter superfamily. Energy-coupling factor EcfA family. As to quaternary structure, forms a stable energy-coupling factor (ECF) transporter complex probably composed of 2 membrane-embedded substrate-binding proteins (S component), 2 ATP-binding proteins (A component) and 2 transmembrane proteins (T component). This complex interacts with a number of substrate-specific components, including FolT, PanT and RibU for 5-formyltetrahydrofolate, pantothenate and riboflavin respectively.

The protein localises to the cell membrane. Its function is as follows. ATP-binding (A) component of a common energy-coupling factor (ECF) ABC-transporter complex. Unlike classic ABC transporters this ECF transporter provides the energy necessary to transport a number of different substrates including 5-formyltetrahydrofolate, pantothenate and riboflavin. Expression of the complex plus FolT in E.coli allows 5-formyltetrahydrofolate uptake; 5-formyltetrahydrofolate is not taken up in the absence of FolT or the EcfA1A2T complex. The polypeptide is Energy-coupling factor transporter ATP-binding protein EcfA2 (Leuconostoc mesenteroides subsp. mesenteroides (strain ATCC 8293 / DSM 20343 / BCRC 11652 / CCM 1803 / JCM 6124 / NCDO 523 / NBRC 100496 / NCIMB 8023 / NCTC 12954 / NRRL B-1118 / 37Y)).